A 273-amino-acid polypeptide reads, in one-letter code: Bis(5'-nucleosyl)-tetraphosphatase, symmetrical (273 aa).

It belongs to the Ap4A hydrolase family.

The enzyme catalyses P(1),P(4)-bis(5'-adenosyl) tetraphosphate + H2O = 2 ADP + 2 H(+). Its function is as follows. Hydrolyzes diadenosine 5',5'''-P1,P4-tetraphosphate to yield ADP. This chain is Bis(5'-nucleosyl)-tetraphosphatase, symmetrical (apaH), found in Buchnera aphidicola subsp. Schizaphis graminum (strain Sg).